A 432-amino-acid polypeptide reads, in one-letter code: Glutamyl-tRNA reductase (432 aa).

Substrate contacts are provided by residues 50 to 53 (TCNR), serine 110, 115 to 117 (ETQ), and glutamine 121. Cysteine 51 (nucleophile) is an active-site residue. An NADP(+)-binding site is contributed by 190–195 (GVGEMS).

Belongs to the glutamyl-tRNA reductase family. In terms of assembly, homodimer.

The enzyme catalyses (S)-4-amino-5-oxopentanoate + tRNA(Glu) + NADP(+) = L-glutamyl-tRNA(Glu) + NADPH + H(+). It participates in porphyrin-containing compound metabolism; protoporphyrin-IX biosynthesis; 5-aminolevulinate from L-glutamyl-tRNA(Glu): step 1/2. Its function is as follows. Catalyzes the NADPH-dependent reduction of glutamyl-tRNA(Glu) to glutamate 1-semialdehyde (GSA). This is Glutamyl-tRNA reductase from Sulfurimonas denitrificans (strain ATCC 33889 / DSM 1251) (Thiomicrospira denitrificans (strain ATCC 33889 / DSM 1251)).